A 160-amino-acid chain; its full sequence is SsrA-binding protein (160 aa).

The tract at residues lysine 132 to glutamate 160 is disordered. Basic and acidic residues predominate over residues aspartate 135–glutamine 146.

It belongs to the SmpB family.

It localises to the cytoplasm. Its function is as follows. Required for rescue of stalled ribosomes mediated by trans-translation. Binds to transfer-messenger RNA (tmRNA), required for stable association of tmRNA with ribosomes. tmRNA and SmpB together mimic tRNA shape, replacing the anticodon stem-loop with SmpB. tmRNA is encoded by the ssrA gene; the 2 termini fold to resemble tRNA(Ala) and it encodes a 'tag peptide', a short internal open reading frame. During trans-translation Ala-aminoacylated tmRNA acts like a tRNA, entering the A-site of stalled ribosomes, displacing the stalled mRNA. The ribosome then switches to translate the ORF on the tmRNA; the nascent peptide is terminated with the 'tag peptide' encoded by the tmRNA and targeted for degradation. The ribosome is freed to recommence translation, which seems to be the essential function of trans-translation. This Leptospira borgpetersenii serovar Hardjo-bovis (strain JB197) protein is SsrA-binding protein.